The following is a 207-amino-acid chain: Inhibitor of hydrogen peroxide resistance (207 aa).

A DNA-binding region (H-T-H motif) is located at residues 163–182 (MNYIHQRTRVSRSVVAEVLA).

It belongs to the IprA family.

Functionally, involved in oxidative stress resistance. This Salmonella typhimurium (strain LT2 / SGSC1412 / ATCC 700720) protein is Inhibitor of hydrogen peroxide resistance.